The chain runs to 61 residues: Small ribosomal subunit protein uS14B (61 aa).

C24, C27, C40, and C43 together coordinate Zn(2+).

Belongs to the universal ribosomal protein uS14 family. Zinc-binding uS14 subfamily. As to quaternary structure, part of the 30S ribosomal subunit. Contacts proteins S3 and S10. Zn(2+) serves as cofactor.

Functionally, binds 16S rRNA, required for the assembly of 30S particles and may also be responsible for determining the conformation of the 16S rRNA at the A site. The polypeptide is Small ribosomal subunit protein uS14B (Bacillus velezensis (strain DSM 23117 / BGSC 10A6 / LMG 26770 / FZB42) (Bacillus amyloliquefaciens subsp. plantarum)).